The sequence spans 601 residues: Elongation factor 4 (601 aa).

A tr-type G domain is found at 7–189; the sequence is RNIRNFSIIA…AIVHRIPPPK (183 aa). GTP contacts are provided by residues 19–24 and 136–139; these read DHGKST and NKID.

This sequence belongs to the TRAFAC class translation factor GTPase superfamily. Classic translation factor GTPase family. LepA subfamily.

The protein resides in the cell inner membrane. The catalysed reaction is GTP + H2O = GDP + phosphate + H(+). Functionally, required for accurate and efficient protein synthesis under certain stress conditions. May act as a fidelity factor of the translation reaction, by catalyzing a one-codon backward translocation of tRNAs on improperly translocated ribosomes. Back-translocation proceeds from a post-translocation (POST) complex to a pre-translocation (PRE) complex, thus giving elongation factor G a second chance to translocate the tRNAs correctly. Binds to ribosomes in a GTP-dependent manner. The polypeptide is Elongation factor 4 (Xanthomonas axonopodis pv. citri (strain 306)).